A 257-amino-acid polypeptide reads, in one-letter code: Short chain dehydrogenase helC (257 aa).

A signal peptide spans 1 to 22 (MNTAIITGAAQGVGLCIAEALA). Valine 13 contributes to the NADP(+) binding site. N-linked (GlcNAc...) asparagine glycosylation is present at asparagine 46. Positions 60 and 87 each coordinate NADP(+). Asparagine 110 is a glycosylation site (N-linked (GlcNAc...) asparagine). Residues tyrosine 154, lysine 158, isoleucine 185, and threonine 187 each coordinate NADP(+). The Proton acceptor role is filled by tyrosine 154. The active-site Lowers pKa of active site Tyr is lysine 158.

Belongs to the short-chain dehydrogenases/reductases (SDR) family.

It participates in mycotoxin biosynthesis. Functionally, short chain dehydrogenase; part of the gene cluster that mediates the biosynthesis of helvolic acid, an antibacterial nortriterpenoid. Protostadienol synthase helA cyclizes (3S)-oxidosqualene to (17Z)-protosta-17(20),24-dien-3-beta-ol (protostadienol). The synthesis of protostadienol is followed by several steps of monooxygenation, dehydrogenation, and acyl transfer to yield the final helvolic acid. Following the cyclization to the tetracyclic protostadienol by helA, cytochrome P450 monooxygenases helB1-mediated and helB2-mediated oxidation at C-4 and C-16, acyltransferase helD2-dependent acetylation of 16-OH, oxidation of C-21 by cytochrome P450 monooxygenase helB4, and short chain dehydrogenase helC-dependent oxidative decarboxylation yield the fusidane skeleton. This intermediate is further modified in three additional steps mediated by the cytochrome P450 monooxygenase helB3, the acyltransferase helD1, and the 3-ketosteroid 1-dehydrogenase helE to give helvolic acid. Compared with the late stages in the biosynthesis of helvolic acid, enzymes involved in the early stage modifications act in a relatively strict order. The hydroxylation of C-16 by helB1 and subsequent acetylation by helD2 should occur before the helB3-mediated oxidation of C-21. C-4 demethylation in fusidane-type antibiotics proceeds in an unusual manner though it is also achieved by oxidative decarboxylation. The methyl group at C-4 beta position is oxidized by helB1 and subsequently removed by the short chain dehydrogenase helC. This is Short chain dehydrogenase helC from Aspergillus fumigatus (strain ATCC MYA-4609 / CBS 101355 / FGSC A1100 / Af293) (Neosartorya fumigata).